Reading from the N-terminus, the 153-residue chain is MAAGLFGLSARRLLAAAATRGLPAARVRWESSFSRTVVAPSAVAGKRPPEPTTPWQEDPEPEDENLYEKNPDSHGYDKDPVLDVWNMRLVFFFGVSIILVLGSTFVAYLPDYRMKEWSRREAERLVKYREANGLPIMESNCFDPSKIQLPEDE.

A mitochondrion-targeting transit peptide spans 1–29; it reads MAAGLFGLSARRLLAAAATRGLPAARVRW. The disordered stretch occupies residues 40–76; it reads PSAVAGKRPPEPTTPWQEDPEPEDENLYEKNPDSHGY. The segment covering 66-76 has biased composition (basic and acidic residues); that stretch reads LYEKNPDSHGY. A helical membrane pass occupies residues 89–109; the sequence is LVFFFGVSIILVLGSTFVAYL.

This sequence belongs to the complex I NDUFB11 subunit family. In terms of assembly, complex I is composed of 45 different subunits. Interacts with BCAP31. In terms of tissue distribution, ubiquitous.

The protein resides in the mitochondrion inner membrane. Functionally, accessory subunit of the mitochondrial membrane respiratory chain NADH dehydrogenase (Complex I), that is believed not to be involved in catalysis. Complex I functions in the transfer of electrons from NADH to the respiratory chain. The immediate electron acceptor for the enzyme is believed to be ubiquinone. This chain is NADH dehydrogenase [ubiquinone] 1 beta subcomplex subunit 11, mitochondrial (NDUFB11), found in Homo sapiens (Human).